Here is a 1172-residue protein sequence, read N- to C-terminus: WD repeat-containing protein 48 homolog (1172 aa).

The interval 1–115 (MYEYYSTGKI…HSYGGGGGGT (115 aa)) is disordered. Polar residues predominate over residues 13-36 (LPQQVDSNGINSKPMNSSPSTPIP). Residues 37–63 (NNNNNNNNNNNNNNNNNNNNNNNNNNN) are compositionally biased toward low complexity. Positions 64-89 (RNKSQQSFYLNNNNRNCGFSSPTKPQ) are enriched in polar residues. The span at 90-107 (YNNNNNNNNNNNSNYNHS) shows a compositional bias: low complexity. WD repeat units lie at residues 152–202 (RHCF…GFKF), 208–246 (DHTD…CVNS), 249–548 (FHDD…SPMF), 560–599 (GEGI…KIFK), 602–641 (GHTD…CIQV), 645–683 (LHTD…QSRL), and 686–727 (RENE…NQSI). Low complexity predominate over residues 341–365 (ISTNNNNNNSSSSNNNNNNNNNNNN). The interval 341–544 (ISTNNNNNNS…NDNNNLNKKF (204 aa)) is disordered. Composition is skewed to polar residues over residues 366–377 (GQTNTHENTAET), 388–408 (QLSS…NFRN), and 417–434 (PPSS…SNGR). Residues 435–485 (NVNNRENNNNNNNNNNNNNNNNNNNNNNNNNNNNNNNNNINNNNHENNGNV) show a composition bias toward low complexity. The segment covering 486 to 503 (DVDDEDDDDDDDDDDDDD) has biased composition (acidic residues). Positions 504 to 513 (CNKNKKKYDD) are enriched in basic and acidic residues. Residues 514 to 543 (NNNNNNYNNNNNKKNNSNDNNNDNNNLNKK) show a composition bias toward low complexity. Over residues 745–769 (NNNNNNNNNNNNNNNNNNNNNNNNN) the composition is skewed to low complexity. Residues 745–775 (NNNNNNNNNNNNNNNNNNNNNNNNNNREKLS) form a disordered region. One copy of the WD 8 repeat lies at 794-833 (QGRAGIIKNQVLNNRRQVLTKDNDNNVQLWDITKGKEIES). A disordered region spans residues 926–986 (ELNHSNDSVN…TNSTTPNSGR (61 aa)). Over residues 930–984 (SNDSVNSSLSSNTSGDNNNNNYNNYNNYNNNNNNGLQKSSSSSSIVSTNSTTPNS) the composition is skewed to low complexity.

Belongs to the WD repeat WDR48 family.

The protein is WD repeat-containing protein 48 homolog of Dictyostelium discoideum (Social amoeba).